A 381-amino-acid polypeptide reads, in one-letter code: Cytochrome b (381 aa).

The next 4 membrane-spanning stretches (helical) occupy residues 34–54 (FGSL…FLAM), 78–99 (WLMR…YLHI), 114–134 (WNIG…GYVL), and 179–199 (FFAF…IHIL). The heme b site is built by H84 and H98. Residues H183 and H197 each contribute to the heme b site. An a ubiquinone-binding site is contributed by H202. 4 consecutive transmembrane segments (helical) span residues 227–247 (YKDL…ALFM), 289–309 (LGGV…PLLH), 321–341 (LTQI…WIGG), and 348–368 (FIMV…FVIP).

It belongs to the cytochrome b family. The cytochrome bc1 complex contains 3 respiratory subunits (MT-CYB, CYC1 and UQCRFS1), 2 core proteins (UQCRC1 and UQCRC2) and probably 6 low-molecular weight proteins. The cofactor is heme b.

The protein localises to the mitochondrion inner membrane. Its function is as follows. Component of the ubiquinol-cytochrome c reductase complex (complex III or cytochrome b-c1 complex) that is part of the mitochondrial respiratory chain. The b-c1 complex mediates electron transfer from ubiquinol to cytochrome c. Contributes to the generation of a proton gradient across the mitochondrial membrane that is then used for ATP synthesis. This Scyliorhinus canicula (Small-spotted catshark) protein is Cytochrome b (mt-cyb).